Reading from the N-terminus, the 161-residue chain is Large ribosomal subunit protein eL21 (161 aa).

The protein belongs to the eukaryotic ribosomal protein eL21 family.

The protein is Large ribosomal subunit protein eL21 (rpl-21) of Caenorhabditis elegans.